Consider the following 438-residue polypeptide: Anaerobic glycerol-3-phosphate dehydrogenase subunit B (438 aa).

It belongs to the anaerobic G-3-P dehydrogenase subunit B family. Composed of a catalytic GlpA/B dimer and of membrane bound GlpC. Requires FMN as cofactor.

The catalysed reaction is a quinone + sn-glycerol 3-phosphate = dihydroxyacetone phosphate + a quinol. Its pathway is polyol metabolism; glycerol degradation via glycerol kinase pathway; glycerone phosphate from sn-glycerol 3-phosphate (anaerobic route): step 1/1. Functionally, conversion of glycerol 3-phosphate to dihydroxyacetone. Uses fumarate or nitrate as electron acceptor. The protein is Anaerobic glycerol-3-phosphate dehydrogenase subunit B of Vibrio vulnificus (strain CMCP6).